Reading from the N-terminus, the 76-residue chain is Anaredoxin (76 aa).

Residues 24–66 (CMVCWEVNSKANGHHLIPYSEGGSADIQNMMTLCPSCHTKYHK) form the HNH domain.

The protein belongs to the HNH nuclease family.

In terms of biological role, putative P-450 reductase. This Nostoc sp. (strain PCC 7120 / SAG 25.82 / UTEX 2576) protein is Anaredoxin.